The following is a 211-amino-acid chain: Orotidine 5'-phosphate decarboxylase (211 aa).

Substrate is bound by residues Asp-7, Lys-29, 57-66 (DLKLADIPNT), Ser-109, 162-172 (PGIGAQGGSPV), Gly-185, and Arg-186. The active-site Proton donor is the Lys-59.

This sequence belongs to the OMP decarboxylase family. Type 1 subfamily. As to quaternary structure, homodimer.

It catalyses the reaction orotidine 5'-phosphate + H(+) = UMP + CO2. Its pathway is pyrimidine metabolism; UMP biosynthesis via de novo pathway; UMP from orotate: step 2/2. Its function is as follows. Catalyzes the decarboxylation of orotidine 5'-monophosphate (OMP) to uridine 5'-monophosphate (UMP). This Pyrococcus furiosus (strain ATCC 43587 / DSM 3638 / JCM 8422 / Vc1) protein is Orotidine 5'-phosphate decarboxylase.